The sequence spans 342 residues: N-acetyl-gamma-glutamyl-phosphate reductase (342 aa).

The active site involves Cys-149.

The protein belongs to the NAGSA dehydrogenase family. Type 1 subfamily.

Its subcellular location is the cytoplasm. It carries out the reaction N-acetyl-L-glutamate 5-semialdehyde + phosphate + NADP(+) = N-acetyl-L-glutamyl 5-phosphate + NADPH + H(+). The protein operates within amino-acid biosynthesis; L-arginine biosynthesis; N(2)-acetyl-L-ornithine from L-glutamate: step 3/4. In terms of biological role, catalyzes the NADPH-dependent reduction of N-acetyl-5-glutamyl phosphate to yield N-acetyl-L-glutamate 5-semialdehyde. This chain is N-acetyl-gamma-glutamyl-phosphate reductase, found in Paracoccus denitrificans (strain Pd 1222).